The following is a 201-amino-acid chain: 3-isopropylmalate dehydratase small subunit (201 aa).

The protein belongs to the LeuD family. LeuD type 1 subfamily. As to quaternary structure, heterodimer of LeuC and LeuD.

It carries out the reaction (2R,3S)-3-isopropylmalate = (2S)-2-isopropylmalate. It participates in amino-acid biosynthesis; L-leucine biosynthesis; L-leucine from 3-methyl-2-oxobutanoate: step 2/4. Catalyzes the isomerization between 2-isopropylmalate and 3-isopropylmalate, via the formation of 2-isopropylmaleate. This chain is 3-isopropylmalate dehydratase small subunit, found in Erwinia tasmaniensis (strain DSM 17950 / CFBP 7177 / CIP 109463 / NCPPB 4357 / Et1/99).